Reading from the N-terminus, the 281-residue chain is Protein DOG1-like 1 (281 aa).

One can recognise a DOG1 domain in the interval 9 to 265 (EKLQQDCYNE…HEWGKSREHR (257 aa)). The segment at 262-281 (REHRRLEASGGDSGGNVTRE) is disordered.

This is Protein DOG1-like 1 from Arabidopsis thaliana (Mouse-ear cress).